The primary structure comprises 335 residues: UDP-N-acetylglucosamine--N-acetylmuramyl-(pentapeptide) pyrophosphoryl-undecaprenol N-acetylglucosamine transferase (335 aa).

UDP-N-acetyl-alpha-D-glucosamine contacts are provided by residues 9–11 (TGG), Asn123, Ser176, and Gln274.

Belongs to the glycosyltransferase 28 family. MurG subfamily.

Its subcellular location is the cell inner membrane. It catalyses the reaction di-trans,octa-cis-undecaprenyl diphospho-N-acetyl-alpha-D-muramoyl-L-alanyl-D-glutamyl-meso-2,6-diaminopimeloyl-D-alanyl-D-alanine + UDP-N-acetyl-alpha-D-glucosamine = di-trans,octa-cis-undecaprenyl diphospho-[N-acetyl-alpha-D-glucosaminyl-(1-&gt;4)]-N-acetyl-alpha-D-muramoyl-L-alanyl-D-glutamyl-meso-2,6-diaminopimeloyl-D-alanyl-D-alanine + UDP + H(+). Its pathway is cell wall biogenesis; peptidoglycan biosynthesis. In terms of biological role, cell wall formation. Catalyzes the transfer of a GlcNAc subunit on undecaprenyl-pyrophosphoryl-MurNAc-pentapeptide (lipid intermediate I) to form undecaprenyl-pyrophosphoryl-MurNAc-(pentapeptide)GlcNAc (lipid intermediate II). The chain is UDP-N-acetylglucosamine--N-acetylmuramyl-(pentapeptide) pyrophosphoryl-undecaprenol N-acetylglucosamine transferase from Campylobacter fetus subsp. fetus (strain 82-40).